Reading from the N-terminus, the 663-residue chain is UvrABC system protein B (663 aa).

Residues 1–10 are compositionally biased toward basic and acidic residues; the sequence is MIDKRDDKPF. A disordered region spans residues 1-23; sequence MIDKRDDKPFKLKSKYKPSGDQP. The Helicase ATP-binding domain maps to 31-271; that stretch reads DNIEGGEKAQ…EQSIAKIQAE (241 aa). 44–51 lines the ATP pocket; sequence GATGTGKT. The Beta-hairpin motif lies at 97–120; sequence YYDYYQPEAYVPSSDTYIEKDSSV. Residues 435–601 enclose the Helicase C-terminal domain; the sequence is QIDDLLGEIN…TIKKDIRGLI (167 aa). The 36-residue stretch at 627-662 folds into the UVR domain; sequence KEAINALQKQMQEAAELLDFELAAQMRDLILELKLM.

This sequence belongs to the UvrB family. As to quaternary structure, forms a heterotetramer with UvrA during the search for lesions. Interacts with UvrC in an incision complex.

It localises to the cytoplasm. Its function is as follows. The UvrABC repair system catalyzes the recognition and processing of DNA lesions. A damage recognition complex composed of 2 UvrA and 2 UvrB subunits scans DNA for abnormalities. Upon binding of the UvrA(2)B(2) complex to a putative damaged site, the DNA wraps around one UvrB monomer. DNA wrap is dependent on ATP binding by UvrB and probably causes local melting of the DNA helix, facilitating insertion of UvrB beta-hairpin between the DNA strands. Then UvrB probes one DNA strand for the presence of a lesion. If a lesion is found the UvrA subunits dissociate and the UvrB-DNA preincision complex is formed. This complex is subsequently bound by UvrC and the second UvrB is released. If no lesion is found, the DNA wraps around the other UvrB subunit that will check the other stand for damage. The chain is UvrABC system protein B from Streptococcus pyogenes serotype M5 (strain Manfredo).